Reading from the N-terminus, the 380-residue chain is High affinity transport system protein p37 (380 aa).

An N-terminal signal peptide occupies residues 1–26 (MLKRKKLLQGFLKFLPLIIPATIFVS). Residue Cys-27 is the site of N-palmitoyl cysteine attachment. A lipid anchor (S-diacylglycerol cysteine) is attached at Cys-27. The disordered stretch occupies residues 285–304 (NHFYTPTENNGKGDSEKSNN).

It is found in the cell membrane. P37 is part of a high-affinity transport system. The sequence is that of High affinity transport system protein p37 (p37) from Mycoplasma pneumoniae (strain ATCC 29342 / M129 / Subtype 1) (Mycoplasmoides pneumoniae).